The following is a 1133-amino-acid chain: Fas-binding factor 1 (1133 aa).

Disordered regions lie at residues 89–198 (LGLK…TPIR) and 211–544 (IMAT…VPVQ). Positions 102 to 113 (AAKDPGKGELPN) are enriched in basic and acidic residues. Low complexity predominate over residues 125-134 (KKSLPSPSSS). Phosphoserine is present on Ser142. The span at 165–182 (PPVTQSKTASDKSPSTVR) shows a compositional bias: polar residues. Composition is skewed to basic and acidic residues over residues 221 to 245 (PKAE…DELL) and 259 to 276 (TGEH…RPQD). The span at 277-286 (SEDMWGDEDF) shows a compositional bias: acidic residues. The span at 295–310 (VVSSEGRQSRRQSVSR) shows a compositional bias: low complexity. The segment covering 325–336 (SKQSPPMASSPI) has biased composition (polar residues). The segment covering 415–424 (ASKEEKEDWL) has biased composition (basic and acidic residues). Over residues 459–469 (SGSQPLTSTQG) the composition is skewed to polar residues. Residues 473-482 (AAAGGSSGTT) show a composition bias toward low complexity. Coiled-coil stretches lie at residues 577 to 727 (AELQ…VDAA) and 773 to 870 (IRQR…EEQK). Lys960 participates in a covalent cross-link: Glycyl lysine isopeptide (Lys-Gly) (interchain with G-Cter in SUMO2). The disordered stretch occupies residues 1062 to 1085 (AASSQSALMPPAPTTRWCSQPPTG).

In terms of assembly, may interact with FAS cytoplasmic domain. Interacts with PARD3. Interacts with TRAPPC14. As to expression, present in various epithelial cells (at protein level).

Its subcellular location is the cytoplasm. The protein localises to the cytoskeleton. The protein resides in the microtubule organizing center. It localises to the centrosome. It is found in the centriole. Its subcellular location is the spindle pole. The protein localises to the cell junction. In terms of biological role, keratin-binding protein required for epithelial cell polarization. Involved in apical junction complex (AJC) assembly via its interaction with PARD3. Required for ciliogenesis. This is Fas-binding factor 1 (FBF1) from Homo sapiens (Human).